The following is a 397-amino-acid chain: CCA-adding enzyme (397 aa).

Residues glycine 32 and arginine 35 each coordinate ATP. Positions 32 and 35 each coordinate CTP. Mg(2+) contacts are provided by aspartate 45 and aspartate 47. Residues arginine 116, aspartate 159, arginine 162, arginine 165, and arginine 168 each contribute to the ATP site. CTP is bound by residues arginine 116, aspartate 159, arginine 162, arginine 165, and arginine 168.

This sequence belongs to the tRNA nucleotidyltransferase/poly(A) polymerase family. Bacterial CCA-adding enzyme type 3 subfamily. In terms of assembly, homodimer. Mg(2+) is required as a cofactor.

The enzyme catalyses a tRNA precursor + 2 CTP + ATP = a tRNA with a 3' CCA end + 3 diphosphate. It catalyses the reaction a tRNA with a 3' CCA end + 2 CTP + ATP = a tRNA with a 3' CCACCA end + 3 diphosphate. Functionally, catalyzes the addition and repair of the essential 3'-terminal CCA sequence in tRNAs without using a nucleic acid template. Adds these three nucleotides in the order of C, C, and A to the tRNA nucleotide-73, using CTP and ATP as substrates and producing inorganic pyrophosphate. tRNA 3'-terminal CCA addition is required both for tRNA processing and repair. Also involved in tRNA surveillance by mediating tandem CCA addition to generate a CCACCA at the 3' terminus of unstable tRNAs. While stable tRNAs receive only 3'-terminal CCA, unstable tRNAs are marked with CCACCA and rapidly degraded. This chain is CCA-adding enzyme, found in Levilactobacillus brevis (strain ATCC 367 / BCRC 12310 / CIP 105137 / JCM 1170 / LMG 11437 / NCIMB 947 / NCTC 947) (Lactobacillus brevis).